A 155-amino-acid chain; its full sequence is uncharacterized protein (155 aa).

The first 23 residues, 1–23 (MTILSLSRFMLAGVLLASFNASA), serve as a signal peptide directing secretion.

It to E.coli YfjT.

This is an uncharacterized protein from Escherichia coli (strain K12).